The sequence spans 383 residues: S-adenosylmethionine synthase (383 aa).

H15 is an ATP binding site. Residue D17 participates in Mg(2+) binding. Residue E43 participates in K(+) binding. L-methionine contacts are provided by E56 and Q99. A flexible loop region spans residues 99–109 (QSPDINQGVDR). Residues 164 to 166 (DAK), 230 to 231 (RF), D239, 245 to 246 (RK), A262, and K266 each bind ATP. D239 is an L-methionine binding site. K270 is a binding site for L-methionine.

It belongs to the AdoMet synthase family. In terms of assembly, homotetramer; dimer of dimers. It depends on Mg(2+) as a cofactor. K(+) is required as a cofactor.

It is found in the cytoplasm. The enzyme catalyses L-methionine + ATP + H2O = S-adenosyl-L-methionine + phosphate + diphosphate. It functions in the pathway amino-acid biosynthesis; S-adenosyl-L-methionine biosynthesis; S-adenosyl-L-methionine from L-methionine: step 1/1. Functionally, catalyzes the formation of S-adenosylmethionine (AdoMet) from methionine and ATP. The overall synthetic reaction is composed of two sequential steps, AdoMet formation and the subsequent tripolyphosphate hydrolysis which occurs prior to release of AdoMet from the enzyme. This chain is S-adenosylmethionine synthase, found in Shewanella amazonensis (strain ATCC BAA-1098 / SB2B).